The following is a 238-amino-acid chain: MEHMFPENQIENLFVGWIKKHIRNGNLTLFEEFFKTDPWIVNRCDKNGSSVFMWICIYGRIDFLKFLFKQESYPGEIINPHRRDKDGNSALHYLAEKKNHLILEEVLGYFGKNGTRICLPNFNGITPVMKAAMRGRSLNMLSLIKFGADPTQKDYHRGFTAWDWAVFTGNMELVKSLNHDYQKPLYMHFPLYKLDVFHRWFKKKPKIIITGCKNNVYEKLPEQNPNFLCVKKLNKYGK.

ANK repeat units lie at residues 47–76 (NGSS…YPGE), 86–119 (DGNS…RICL), 123–152 (NGIT…DPTQ), and 157–186 (RGFT…KPLY). The Nuclear localization signal signature appears at 80–86 (PHRRDKD). A Nuclear localization signal motif is present at residues 202 to 213 (KKKPKIIITGCK). Residues 205–212 (PKIIITGC) carry the PxIxITxC motif; Interaction with host PPP3CA motif. An FLCV motif motif is present at residues 227–230 (FLCV).

It belongs to the asfivirus A238L family. In terms of assembly, interacts with host PPIA. Interacts with host PPP3CA/Calcineurin. Interacts with host RELA/p65; interaction of the 32 kDa form with host RELA results in the formation of a stable complex with NF-kappa-B. Interacts with host PPP3R1. Interacts with host EP300; this interaction inhibits the association of host EP300 with host RELA, JUN and NFATC2. In terms of processing, the protein exists in a 28 kDa and a 32 kDa form, probably due to post-translational modifications which are neither phosphorylation, nor sumoylation.

It localises to the host nucleus. It is found in the host cytoplasm. In terms of biological role, ikB-like protein that inhibits the binding of NF-kappa-B to DNA, thereby downregulating pro-inflammatory cytokine production. Forms a heterodimer with the NF-kappa-B subunit RELA/p65 and prevents the activation of the NF-kappa-B transcription factor. Inhibits calcineurin function, which is required for the induction of nuclear factor of activated T cells (NFAT)-dependent immune response genes. Prevents the binding of substrates to calcineurin without affecting the phosphatase activity. Does not contain the serine residues that are phosphorylated by host IkB kinase and thus is not degraded following stimulation of the NFkB pathway. The chain is IkB-like protein (A238L) from African swine fever virus (isolate Warthog/Namibia/Wart80/1980) (ASFV).